Here is a 182-residue protein sequence, read N- to C-terminus: CD-NTase-associated protein 15 (182 aa).

A run of 2 helical transmembrane segments spans residues 11–31 (ITGW…CTVW) and 33–53 (IGWI…TIGY).

This sequence belongs to the CBASS Cap15 membrane effector family. The beta barrel domain oligomerizes; in the presence of cyclic nucleotides (probably 3',2'-cGAMP) higher-level oligomers occur.

The protein resides in the cell membrane. Functionally, effector protein of a CBASS antivirus system. CBASS (cyclic oligonucleotide-based antiphage signaling system) provides immunity against bacteriophage. The CD-NTase protein (CdnE) synthesizes cyclic nucleotides in response to infection; these serve as specific second messenger signals. The signals activate a diverse range of effectors, leading to bacterial cell death and thus abortive phage infection. This system triggers membrane disruption without lysis. A type I-B CBASS system. Binds cyclic nucleotide second messenger 3',2'-cGAMP, probably oligomerizing, and induces cell membrane shrinkage and rupture, leading to cell death. Protects S.aureus against phage infection. When the CBASS operon (cdnE-cap15) is introduced in S.aureus strain RN4220 there is strong protection against lytic DNA phages 80alpha-vir and phi-NM1-gamma-6 but little to no protection against phages phi-NM4-gamma-4 or phi-12-gamma-3. The protein is CD-NTase-associated protein 15 of Staphylococcus schleiferi.